We begin with the raw amino-acid sequence, 340 residues long: Sterol-4-alpha-carboxylate 3-dehydrogenase erg26, decarboxylating (340 aa).

The active-site Proton acceptor is tyrosine 144. NAD(+) is bound at residue lysine 148.

This sequence belongs to the 3-beta-HSD family. Heterotetramer of erg25, erg26, erg27 and erg28. Erg28 acts as a scaffold to tether erg27 and other 4,4-demethylation-related enzymes, forming a demethylation enzyme complex, in the endoplasmic reticulum.

The protein localises to the endoplasmic reticulum membrane. The enzyme catalyses 4beta-methylzymosterol-4alpha-carboxylate + NADP(+) = 3-dehydro-4-methylzymosterol + CO2 + NADPH. Its pathway is steroid biosynthesis; zymosterol biosynthesis; zymosterol from lanosterol: step 4/6. The protein operates within steroid metabolism; ergosterol biosynthesis. Its function is as follows. Sterol-4-alpha-carboxylate 3-dehydrogenase; part of the third module of ergosterol biosynthesis pathway that includes by the late steps of the pathway. Erg26 is a catalytic component of the C-4 demethylation complex that catalyzes the oxidative decarboxylation that results in a reduction of the 3-beta-hydroxy group at the C-3 carbon to an oxo group. The third module or late pathway involves the ergosterol synthesis itself through consecutive reactions that mainly occur in the endoplasmic reticulum (ER) membrane. Firstly, the squalene synthase erg9 catalyzes the condensation of 2 farnesyl pyrophosphate moieties to form squalene, which is the precursor of all steroids. Secondly, squalene is converted into lanosterol by the consecutive action of the squalene epoxidase erg1 and the lanosterol synthase erg7. The lanosterol 14-alpha-demethylase erg11/cyp1 catalyzes C14-demethylation of lanosterol to produce 4,4'-dimethyl cholesta-8,14,24-triene-3-beta-ol. In the next steps, a complex process involving various demethylation, reduction and desaturation reactions catalyzed by the C-14 reductase erg24 and the C-4 demethylation complex erg25-erg26-erg27 leads to the production of zymosterol. Erg28 likely functions in the C-4 demethylation complex reaction by tethering erg26 and Erg27 to the endoplasmic reticulum or to facilitate interaction between these proteins. Then, the sterol 24-C-methyltransferase erg6 catalyzes the methyl transfer from S-adenosyl-methionine to the C-24 of zymosterol to form fecosterol. The C-8 sterol isomerase erg2 catalyzes the reaction which results in unsaturation at C-7 in the B ring of sterols and thus converts fecosterol to episterol. The sterol-C5-desaturases erg31 and erg32 then catalyze the introduction of a C-5 double bond in the B ring to produce 5-dehydroepisterol. The C-22 sterol desaturase erg5 further converts 5-dehydroepisterol into ergosta-5,7,22,24(28)-tetraen-3beta-ol by forming the C-22(23) double bond in the sterol side chain. Finally, ergosta-5,7,22,24(28)-tetraen-3beta-ol is substrate of the C-24(28) sterol reductase erg4 to produce ergosterol. In the genus Schizosaccharomyces, a second route exists between lanosterol and fecosterol, via the methylation of lanosterol to eburicol by erg6, followed by C14-demethylation by erg11/cyp1 and C4-demethylation by the demethylation complex erg25-erg26-erg27. The sequence is that of Sterol-4-alpha-carboxylate 3-dehydrogenase erg26, decarboxylating from Schizosaccharomyces pombe (strain 972 / ATCC 24843) (Fission yeast).